Consider the following 202-residue polypeptide: Putative transposon Tn552 DNA-invertase bin3 (202 aa).

Residues 1 to 143 (MIIGYARVSS…QGIQVAKEKG (143 aa)) form the Resolvase/invertase-type recombinase catalytic domain. Ser-9 functions as the O-(5'-phospho-DNA)-serine intermediate in the catalytic mechanism.

The protein belongs to the site-specific recombinase resolvase family.

Potential DNA invertase. This is Putative transposon Tn552 DNA-invertase bin3 (bin3) from Staphylococcus aureus.